Consider the following 204-residue polypeptide: Holliday junction branch migration complex subunit RuvA (204 aa).

The domain I stretch occupies residues 1-64; sequence MIGKLKGTIE…EDQIRLFGFM (64 aa). The segment at 65-143 is domain II; it reads AVLEREWFNL…AFAGEATNIG (79 aa). Residues 144–151 are flexible linker; it reads FKQELGEG. The domain III stretch occupies residues 152–204; that stretch reads VAPAPVSDAVSALTNLGYSRDQAANAIAAAMKVAGDEADSAKLIRLGLKELSR.

Belongs to the RuvA family. As to quaternary structure, homotetramer. Forms an RuvA(8)-RuvB(12)-Holliday junction (HJ) complex. HJ DNA is sandwiched between 2 RuvA tetramers; dsDNA enters through RuvA and exits via RuvB. An RuvB hexamer assembles on each DNA strand where it exits the tetramer. Each RuvB hexamer is contacted by two RuvA subunits (via domain III) on 2 adjacent RuvB subunits; this complex drives branch migration. In the full resolvosome a probable DNA-RuvA(4)-RuvB(12)-RuvC(2) complex forms which resolves the HJ.

Its subcellular location is the cytoplasm. In terms of biological role, the RuvA-RuvB-RuvC complex processes Holliday junction (HJ) DNA during genetic recombination and DNA repair, while the RuvA-RuvB complex plays an important role in the rescue of blocked DNA replication forks via replication fork reversal (RFR). RuvA specifically binds to HJ cruciform DNA, conferring on it an open structure. The RuvB hexamer acts as an ATP-dependent pump, pulling dsDNA into and through the RuvAB complex. HJ branch migration allows RuvC to scan DNA until it finds its consensus sequence, where it cleaves and resolves the cruciform DNA. The polypeptide is Holliday junction branch migration complex subunit RuvA (Rhizobium rhizogenes (strain K84 / ATCC BAA-868) (Agrobacterium radiobacter)).